The primary structure comprises 91 residues: Soluble cytochrome b558 (91 aa).

In terms of domain architecture, Cytochrome b5 heme-binding spans 8–88; that stretch reads LPVFTLEQVA…LQRYLIGTLE (81 aa). Cysteine 25 and cysteine 54 are disulfide-bonded. Residues histidine 43 and histidine 71 each coordinate heme.

The sequence is that of Soluble cytochrome b558 from Ectothiorhodospira shaposhnikovii (Ectothiorhodospira vacuolata).